Consider the following 290-residue polypeptide: Dehydrodolichyl diphosphate synthase CPT3 (290 aa).

The active site involves D42.

This sequence belongs to the UPP synthase family. It depends on Mg(2+) as a cofactor. In terms of tissue distribution, expressed in leaf trichomes and stem trichomes. Expressed at low levels in young leaves, stems and old leaves.

It is found in the cytoplasm. Its subcellular location is the cytosol. It carries out the reaction n isopentenyl diphosphate + (2E,6E)-farnesyl diphosphate = a di-trans,poly-cis-polyprenyl diphosphate + n diphosphate. Its function is as follows. Catalyzes cis-prenyl chain elongation to produce the polyprenyl backbone of dolichol, a glycosyl carrier-lipid required for the biosynthesis of several classes of glycoprotein. This Solanum lycopersicum (Tomato) protein is Dehydrodolichyl diphosphate synthase CPT3.